A 260-amino-acid polypeptide reads, in one-letter code: Adenosylcobinamide-GDP ribazoletransferase (260 aa).

Helical transmembrane passes span 42 to 62, 64 to 84, 117 to 137, 144 to 164, 192 to 212, 214 to 234, and 240 to 260; these read PLAG…ANAI, LPPL…TGAL, FAAL…MAII, YALL…LAFW, GLGL…VALI, ALVL…AKIG, and TLGA…VMAL.

This sequence belongs to the CobS family. It depends on Mg(2+) as a cofactor.

It localises to the cell inner membrane. It catalyses the reaction alpha-ribazole + adenosylcob(III)inamide-GDP = adenosylcob(III)alamin + GMP + H(+). It carries out the reaction alpha-ribazole 5'-phosphate + adenosylcob(III)inamide-GDP = adenosylcob(III)alamin 5'-phosphate + GMP + H(+). Its pathway is cofactor biosynthesis; adenosylcobalamin biosynthesis; adenosylcobalamin from cob(II)yrinate a,c-diamide: step 7/7. Joins adenosylcobinamide-GDP and alpha-ribazole to generate adenosylcobalamin (Ado-cobalamin). Also synthesizes adenosylcobalamin 5'-phosphate from adenosylcobinamide-GDP and alpha-ribazole 5'-phosphate. This is Adenosylcobinamide-GDP ribazoletransferase from Brucella abortus (strain S19).